The sequence spans 293 residues: Putative F-box/kelch-repeat protein At4g34170 (293 aa).

The 47-residue stretch at 9-55 folds into the F-box domain; it reads VKTMLMLHDDLILNCLARVSRSNHPTLSLVCKRFHSLLASVELYQTR. Kelch repeat units lie at residues 94–140, 141–187, and 226–272; these read NIDA…TLDG, KIYV…ESVR, and SYCV…LADY.

In Arabidopsis thaliana (Mouse-ear cress), this protein is Putative F-box/kelch-repeat protein At4g34170.